Consider the following 393-residue polypeptide: Probable tRNA sulfurtransferase (393 aa).

Residues aspartate 61 to glutamate 168 enclose the THUMP domain. Residues leucine 186–leucine 187, tyrosine 211–phenylalanine 212, arginine 268, glycine 290, and glutamine 299 each bind ATP.

The protein belongs to the ThiI family.

The protein resides in the cytoplasm. The catalysed reaction is [ThiI sulfur-carrier protein]-S-sulfanyl-L-cysteine + a uridine in tRNA + 2 reduced [2Fe-2S]-[ferredoxin] + ATP + H(+) = [ThiI sulfur-carrier protein]-L-cysteine + a 4-thiouridine in tRNA + 2 oxidized [2Fe-2S]-[ferredoxin] + AMP + diphosphate. The enzyme catalyses [ThiS sulfur-carrier protein]-C-terminal Gly-Gly-AMP + S-sulfanyl-L-cysteinyl-[cysteine desulfurase] + AH2 = [ThiS sulfur-carrier protein]-C-terminal-Gly-aminoethanethioate + L-cysteinyl-[cysteine desulfurase] + A + AMP + 2 H(+). The protein operates within cofactor biosynthesis; thiamine diphosphate biosynthesis. Functionally, catalyzes the ATP-dependent transfer of a sulfur to tRNA to produce 4-thiouridine in position 8 of tRNAs, which functions as a near-UV photosensor. Also catalyzes the transfer of sulfur to the sulfur carrier protein ThiS, forming ThiS-thiocarboxylate. This is a step in the synthesis of thiazole, in the thiamine biosynthesis pathway. The sulfur is donated as persulfide by IscS. In Lachnospira eligens (strain ATCC 27750 / DSM 3376 / VPI C15-48 / C15-B4) (Eubacterium eligens), this protein is Probable tRNA sulfurtransferase.